The primary structure comprises 256 residues: Acetyl-coenzyme A carboxylase carboxyl transferase subunit alpha (256 aa).

Positions 1-236 constitute a CoA carboxyltransferase C-terminal domain; that stretch reads MSDVARILKE…KTAIVDELAE (236 aa).

This sequence belongs to the AccA family. As to quaternary structure, acetyl-CoA carboxylase is a heterohexamer composed of biotin carboxyl carrier protein (AccB), biotin carboxylase (AccC) and two subunits each of ACCase subunit alpha (AccA) and ACCase subunit beta (AccD).

The protein localises to the cytoplasm. The catalysed reaction is N(6)-carboxybiotinyl-L-lysyl-[protein] + acetyl-CoA = N(6)-biotinyl-L-lysyl-[protein] + malonyl-CoA. Its pathway is lipid metabolism; malonyl-CoA biosynthesis; malonyl-CoA from acetyl-CoA: step 1/1. In terms of biological role, component of the acetyl coenzyme A carboxylase (ACC) complex. First, biotin carboxylase catalyzes the carboxylation of biotin on its carrier protein (BCCP) and then the CO(2) group is transferred by the carboxyltransferase to acetyl-CoA to form malonyl-CoA. This chain is Acetyl-coenzyme A carboxylase carboxyl transferase subunit alpha, found in Streptococcus thermophilus (strain ATCC BAA-491 / LMD-9).